We begin with the raw amino-acid sequence, 454 residues long: Transmembrane protein adipocyte-associated 1 homolog (454 aa).

N-linked (GlcNAc...) asparagine glycosylation is found at Asn26 and Asn44. The next 5 helical transmembrane spans lie at 80-100 (AILI…TSVI), 113-133 (AFTL…VYSM), 151-171 (IIIK…GLLF), 180-200 (ILIA…VQVI), and 224-244 (FVFW…IMCL). N-linked (GlcNAc...) asparagine glycosylation occurs at Asn258. 2 helical membrane passes run 262–282 (FIYC…AALI) and 290–310 (LCFV…IIYF). N-linked (GlcNAc...) asparagine glycans are attached at residues Asn322 and Asn323. The segment at 408-454 (RTGSDDFAHHRDSMLSEPSTGTTTRHLKGLGPQGSLVFEEDPSSLRL) is disordered. The segment covering 410-421 (GSDDFAHHRDSM) has biased composition (basic and acidic residues). Positions 445-454 (FEEDPSSLRL) are enriched in acidic residues.

This sequence belongs to the UPF0359 family.

It localises to the membrane. This Caenorhabditis briggsae protein is Transmembrane protein adipocyte-associated 1 homolog (tpra-1).